A 147-amino-acid chain; its full sequence is Myoglobin (147 aa).

The Globin domain occupies 2 to 141 (ADFDMVLKCW…IIADMEADYK (140 aa)). His60 serves as a coordination point for nitrite. O2 is bound at residue His60. Residue His89 participates in heme b binding.

It belongs to the globin family. In terms of assembly, monomeric.

It is found in the cytoplasm. The protein localises to the sarcoplasm. It carries out the reaction Fe(III)-heme b-[protein] + nitric oxide + H2O = Fe(II)-heme b-[protein] + nitrite + 2 H(+). The catalysed reaction is H2O2 + AH2 = A + 2 H2O. Its function is as follows. Monomeric heme protein which primary function is to store oxygen and facilitate its diffusion within muscle tissues. Reversibly binds oxygen through a pentacoordinated heme iron and enables its timely and efficient release as needed during periods of heightened demand. Depending on the oxidative conditions of tissues and cells, and in addition to its ability to bind oxygen, it also has a nitrite reductase activity whereby it regulates the production of bioactive nitric oxide. Under stress conditions, like hypoxia and anoxia, it also protects cells against reactive oxygen species thanks to its pseudoperoxidase activity. This Gobionotothen gibberifrons (Humped rockcod) protein is Myoglobin (mb).